The primary structure comprises 298 residues: uncharacterized protein (298 aa).

The active site involves Asp119.

Belongs to the pseudouridine synthase RluA family.

It carries out the reaction a uridine in RNA = a pseudouridine in RNA. This is an uncharacterized protein from Helicobacter pylori (strain ATCC 700392 / 26695) (Campylobacter pylori).